Here is a 260-residue protein sequence, read N- to C-terminus: uncharacterized protein (260 aa).

A signal peptide spans 1–22 (MGYLKGFALYISILILIVFIAG). The N-palmitoyl cysteine moiety is linked to residue Cys23. Residue Cys23 is the site of S-diacylglycerol cysteine attachment.

The protein belongs to the staphylococcal tandem lipoprotein family.

It localises to the cell membrane. This is an uncharacterized protein from Staphylococcus aureus (strain MSSA476).